Consider the following 142-residue polypeptide: MKHYELLFILKPTLTEEEVKAKVDFVKEVITKNGGEIATVVEMGTRKLAYTIKKYERGTYFVIYYKAPPTLLAELTRNIRITEDIIRFLSVKYENKREIAAWERLCKGIKQTIKKEPREPREPRAPREPKAEKIEEQTFSEE.

Over residues 113–136 (IKKEPREPREPRAPREPKAEKIEE) the composition is skewed to basic and acidic residues. The segment at 113–142 (IKKEPREPREPRAPREPKAEKIEEQTFSEE) is disordered.

This sequence belongs to the bacterial ribosomal protein bS6 family.

In terms of biological role, binds together with bS18 to 16S ribosomal RNA. The sequence is that of Small ribosomal subunit protein bS6 from Campylobacter curvus (strain 525.92).